Here is a 359-residue protein sequence, read N- to C-terminus: MDLISFKEKDISKKECLELFLDTENFFDILKVADDIRKESVGDTVTYVLNANINFTNVCSGTCKFCAFKTEKEDPNSFFLNPDKVAEKALLARKTGATEVCIQGGLLPEIDTYFQAEILQKVKKITEKYGGIDIHAFSPMEVKSAAENCGLNVKEALKILKDSGLKTMPGTAAEILNDEIRNEICPTKLTTSEWIDVVKTAHKNGIKTTCTMMYGHIEENVHLVEHLSILKEIQKETSGFTEFVPLTFLHENAPLHHIGKVKSGASGILDLKVYAISRIFFKNYLKNIQTSWVKLGIKLSQISLNCGANDVGGTLMEESISKAAGGSFGTCMSEEKLKNMILNVNKIPKKRNTLYELIN.

The region spanning 45–282 (VTYVLNANIN…VYAISRIFFK (238 aa)) is the Radical SAM core domain. Positions 59, 63, and 66 each coordinate [4Fe-4S] cluster.

This sequence belongs to the radical SAM superfamily. CofH family. Consists of two subunits, CofG and CofH. [4Fe-4S] cluster is required as a cofactor.

The catalysed reaction is 5-amino-6-(D-ribitylamino)uracil + L-tyrosine + S-adenosyl-L-methionine = 5-amino-5-(4-hydroxybenzyl)-6-(D-ribitylimino)-5,6-dihydrouracil + 2-iminoacetate + 5'-deoxyadenosine + L-methionine + H(+). It participates in cofactor biosynthesis; coenzyme F0 biosynthesis. Its function is as follows. Catalyzes the radical-mediated synthesis of 5-amino-5-(4-hydroxybenzyl)-6-(D-ribitylimino)-5,6-dihydrouracil from 5-amino-6-(D-ribitylamino)uracil and L-tyrosine. In Methanococcus vannielii (strain ATCC 35089 / DSM 1224 / JCM 13029 / OCM 148 / SB), this protein is 5-amino-6-(D-ribitylamino)uracil--L-tyrosine 4-hydroxyphenyl transferase.